We begin with the raw amino-acid sequence, 300 residues long: Fe(3+) dicitrate-binding periplasmic protein FecB (300 aa).

The N-terminal stretch at 1-21 is a signal peptide; that stretch reads MLAFIRFLFAGLLLVISHAFA. One can recognise a Fe/B12 periplasmic-binding domain in the interval 39–295; that stretch reads RIVVLELSFA…DTVKIFHHQP (257 aa).

The protein belongs to the bacterial solute-binding protein 8 family. In terms of assembly, the complex is composed of two ATP-binding proteins (FecE), two transmembrane proteins (FecC and FecD) and a solute-binding protein (FecB). Interacts with FecC and FecD.

It localises to the periplasm. Its function is as follows. Part of the ABC transporter complex FecBCDE involved in citrate-dependent Fe(3+) uptake. Binds both iron-free and iron-loaded citrate although it binds iron-loaded citrate with a higher affinity. Binds different forms of Fe(3+)-citrate as well as citrate complexed with various representative Fe(3+)-mimics (Ga(3+), Al(3+), Sc(3+) and In(3+)) and a representative divalent metal ion (Mg(2+)). Can also bind various tricarboxylates in iron-free and iron-loaded form. The chain is Fe(3+) dicitrate-binding periplasmic protein FecB from Escherichia coli (strain K12).